Reading from the N-terminus, the 372-residue chain is L-selectin (372 aa).

The N-terminal stretch at 1–28 (MVFPWRCEGTYWGSRNILKLWVWTLLCC) is a signal peptide. A propeptide spanning residues 29-38 (DFLIHHGTHC) is cleaved from the precursor. Over 39-332 (WTYHYSEKPM…FSKIKEGDYN (294 aa)) the chain is Extracellular. The C-type lectin domain occupies 55–155 (KFCKQNYTDL…ACHKRKAALC (101 aa)). Intrachain disulfides connect Cys57-Cys155, Cys128-Cys147, Cys128-Cys160, Cys160-Cys171, Cys165-Cys180, Cys182-Cys191, Cys197-Cys241, Cys227-Cys254, Cys259-Cys303, and Cys289-Cys316. N-linked (GlcNAc...) asparagine glycosylation is found at Asn60 and Asn104. Residues Glu118, Asn120, Glu126, Asn143, and Asp144 each contribute to the Ca(2+) site. Residues 156-192 (YTASCQPGSCNGRGECVETINNHTCICDAGYYGPQCQ) enclose the EGF-like domain. The N-linked (GlcNAc...) asparagine glycan is linked to Asn177. Sushi domains are found at residues 195-256 (VQCE…ICQV) and 257-318 (VQCE…ICQE). 7 N-linked (GlcNAc...) asparagine glycosylation sites follow: Asn216, Asn226, Asn246, Asn278, Asn288, Asn308, and Asn320. The helical transmembrane segment at 333–355 (PLFIPVAVMVTAFSGLAFLIWLA) threads the bilayer. Residues 356-372 (RRLKKGKKSQERMDDPY) are Cytoplasmic-facing.

This sequence belongs to the selectin/LECAM family. Interaction with SELPLG/PSGL1 and PODXL2 is required for promoting recruitment and rolling of leukocytes. This interaction is dependent on the sialyl Lewis X glycan modification of SELPLG and PODXL2, and tyrosine sulfation modifications of SELPLG. Sulfation on 'Tyr-51' of SELPLG is important for L-selectin binding. Post-translationally, N-glycosylated. Predominantly expressed in lymphoid tissue.

It is found in the cell membrane. Calcium-dependent lectin that mediates cell adhesion by binding to glycoproteins on neighboring cells. Mediates the adherence of lymphocytes to endothelial cells of high endothelial venules in peripheral lymph nodes. Promotes initial tethering and rolling of leukocytes in endothelia. This is L-selectin (Sell) from Mus musculus (Mouse).